A 305-amino-acid chain; its full sequence is Oxidoreductase swnR (305 aa).

The protein belongs to the NmrA-type oxidoreductase family. Isoflavone reductase subfamily.

The enzyme catalyses L-pipecolate + O2 = L-1-piperideine-6-carboxylate + H2O2 + H(+). It participates in mycotoxin biosynthesis. In terms of biological role, oxidoreductase; part of the gene cluster that mediates the biosynthesis of swainsonine (SW), a cytotoxic fungal alkaloid and a potential cancer therapy drug. Swainsonine production occurs via a multibranched pathway and is dispensable for fungal colonization of plants and infection of insect hosts. The first step of swainsonine biosynthesis is the production of the precursor pipecolic acid (PA) via conversion of L-lysine (Lys) to 1-piperideine-6-carboxylate (P6C) by the aminotransferase swnA, the latter being further reduced to PA by the reductase swnR. The PKS-NRPS hybrid synthetase swnK uptakes and condensates PA and malonyl-CoA with and without skipping of the ketoreductase (KR) domain in order to produce 3 intermediates, 1-oxoindolizidine, (1S)-1-hydroxyindolizin, and (1R)-1-hydroxyindolizine; with the transisomer (1S)-1-hydroxyindolizin being predominant. The terminal thioester reductase (TE) domain of swnK is involved in reduction of the thioester bond to release the intermediate aldehydes. The oxidoreductase swnN could contribute to the reduction of 1-oxoindolizidine to (1S)-1-hydroxyindolizin and (1R)-1-hydroxyindolizine, contributing to the major route of SW production. The dioxygenase swnH2 would be responsible for the oxidization of (1R)-1-hydroxyindolizine into (1R,2S)-1,2-dihydroxyindolizine and of (1S)-1-hydroxyindolizin to yield both (1R,2S)-1,2-dihydroxyindolizine and (1S,2S)-1,2-dihydroxyindolizine. The dioxygenase swnH1 then performs the conversion of the 1,2-dihydroxyindolizine epimers to SW. The polypeptide is Oxidoreductase swnR (Arthroderma benhamiae (strain ATCC MYA-4681 / CBS 112371) (Trichophyton mentagrophytes)).